Reading from the N-terminus, the 377-residue chain is Alternative oxidase, mitochondrial (377 aa).

A helical transmembrane segment spans residues 149–169 (LSRFIFLESIAAVPGMVAGML). Residues Glu156, Glu195, and His198 each contribute to the Fe cation site. A helical transmembrane segment spans residues 214–234 (ILIIGAQGVYFNAMFVAYLIS). Fe cation-binding residues include Glu246, Glu303, and His306.

This sequence belongs to the alternative oxidase family. Requires Fe cation as cofactor.

It is found in the mitochondrion inner membrane. Its function is as follows. Catalyzes cyanide-resistant oxygen consumption. May increase respiration when the cytochrome respiratory pathway is restricted, or in response to low temperatures. This Pyricularia oryzae (strain 70-15 / ATCC MYA-4617 / FGSC 8958) (Rice blast fungus) protein is Alternative oxidase, mitochondrial (AOX1).